The primary structure comprises 136 residues: Large ribosomal subunit protein uL16 (136 aa).

The protein belongs to the universal ribosomal protein uL16 family. In terms of assembly, part of the 50S ribosomal subunit.

Functionally, binds 23S rRNA and is also seen to make contacts with the A and possibly P site tRNAs. In Erwinia tasmaniensis (strain DSM 17950 / CFBP 7177 / CIP 109463 / NCPPB 4357 / Et1/99), this protein is Large ribosomal subunit protein uL16.